Here is a 487-residue protein sequence, read N- to C-terminus: NADH-quinone oxidoreductase subunit N (487 aa).

The next 14 helical transmembrane spans lie at 8-28 (LLAL…MLAI), 37-57 (AFVV…IVMA), 71-91 (GYAV…CTFG), 104-124 (EFYL…GSRH), 125-145 (LASL…LVGY), 159-179 (YMVL…LLYA), 203-223 (LMGG…LAPF), 235-255 (PAPV…CVLL), 269-289 (IHWL…LLAL), 303-323 (ISHF…QMPV), 327-347 (GVYL…ISMM), 374-394 (AVLT…GFIG), 408-427 (WWLS…YYLR), and 449-469 (AITS…ALGL).

Belongs to the complex I subunit 2 family. NDH-1 is composed of 14 different subunits. Subunits NuoA, H, J, K, L, M, N constitute the membrane sector of the complex.

The protein localises to the cell inner membrane. The catalysed reaction is a quinone + NADH + 5 H(+)(in) = a quinol + NAD(+) + 4 H(+)(out). Functionally, NDH-1 shuttles electrons from NADH, via FMN and iron-sulfur (Fe-S) centers, to quinones in the respiratory chain. The immediate electron acceptor for the enzyme in this species is believed to be ubiquinone. Couples the redox reaction to proton translocation (for every two electrons transferred, four hydrogen ions are translocated across the cytoplasmic membrane), and thus conserves the redox energy in a proton gradient. In Aeromonas hydrophila subsp. hydrophila (strain ATCC 7966 / DSM 30187 / BCRC 13018 / CCUG 14551 / JCM 1027 / KCTC 2358 / NCIMB 9240 / NCTC 8049), this protein is NADH-quinone oxidoreductase subunit N.